Consider the following 257-residue polypeptide: Probable septum site-determining protein MinC (257 aa).

This sequence belongs to the MinC family. Interacts with MinD and FtsZ.

Cell division inhibitor that blocks the formation of polar Z ring septums. Rapidly oscillates between the poles of the cell to destabilize FtsZ filaments that have formed before they mature into polar Z rings. Prevents FtsZ polymerization. In Burkholderia lata (strain ATCC 17760 / DSM 23089 / LMG 22485 / NCIMB 9086 / R18194 / 383), this protein is Probable septum site-determining protein MinC.